The primary structure comprises 202 residues: Amelogenin (202 aa).

S16 carries the phosphoserine modification. The tract at residues 77 to 202 is disordered; sequence QPAPPQQPVM…TDKTKREEVD (126 aa). The span at 78 to 87 shows a compositional bias: pro residues; sequence PAPPQQPVMP. Residues 101-112 show a composition bias toward low complexity; the sequence is QPNLPQPGQQPY. The span at 113 to 125 shows a compositional bias: pro residues; sequence QPQPAQQPQPHQP. Residues 126–158 are compositionally biased toward low complexity; sequence IQPIQPIQPIQPMQPMQPMQPMQPMQPMQPQTP. Positions 164 to 176 are enriched in pro residues; the sequence is PLPPQPPLPPMFP.

It belongs to the amelogenin family.

The protein resides in the secreted. The protein localises to the extracellular space. Its subcellular location is the extracellular matrix. Its function is as follows. Plays a role in the biomineralization of teeth. Seems to regulate the formation of crystallites during the secretory stage of tooth enamel development. Thought to play a major role in the structural organization and mineralization of developing enamel. This Monodelphis domestica (Gray short-tailed opossum) protein is Amelogenin (AMEL).